The primary structure comprises 69 residues: DNA-directed RNA polymerase subunit epsilon (69 aa).

The protein belongs to the RNA polymerase subunit epsilon family. In terms of assembly, RNAP is composed of a core of 2 alpha, a beta and a beta' subunit. The core is associated with a delta subunit, and at least one of epsilon or omega. When a sigma factor is associated with the core the holoenzyme is formed, which can initiate transcription.

The enzyme catalyses RNA(n) + a ribonucleoside 5'-triphosphate = RNA(n+1) + diphosphate. In terms of biological role, a non-essential component of RNA polymerase (RNAP). The chain is DNA-directed RNA polymerase subunit epsilon from Shouchella clausii (strain KSM-K16) (Alkalihalobacillus clausii).